The following is a 396-amino-acid chain: L-lactate dehydrogenase (396 aa).

One can recognise an FMN hydroxy acid dehydrogenase domain in the interval methionine 1–glycine 380. Tyrosine 24 contacts substrate. Serine 106 and glutamine 127 together coordinate FMN. Tyrosine 129 serves as a coordination point for substrate. Threonine 155 serves as a coordination point for FMN. Substrate is bound at residue arginine 164. Position 251 (lysine 251) interacts with FMN. Histidine 275 (proton acceptor) is an active-site residue. Arginine 278 provides a ligand contact to substrate. Aspartate 306–arginine 330 is an FMN binding site.

Belongs to the FMN-dependent alpha-hydroxy acid dehydrogenase family. The cofactor is FMN.

The protein localises to the cell inner membrane. The catalysed reaction is (S)-lactate + A = pyruvate + AH2. Its function is as follows. Catalyzes the conversion of L-lactate to pyruvate. Is coupled to the respiratory chain. In Escherichia coli O127:H6 (strain E2348/69 / EPEC), this protein is L-lactate dehydrogenase.